Reading from the N-terminus, the 166-residue chain is Interferon gamma (166 aa).

The first 23 residues, 1-23, serve as a signal peptide directing secretion; sequence MKYTSYFLALLLCVLLGFSGSYG. Gln24 carries the post-translational modification Pyrrolidone carboxylic acid. N-linked (GlcNAc...) asparagine glycans are attached at residues Asn39 and Asn106.

The protein belongs to the type II (or gamma) interferon family. As to quaternary structure, homodimer. Interacts with IFNGR1 (via extracellular domain); this interaction promotes IFNGR1 dimerization. Released primarily from activated T lymphocytes.

It is found in the secreted. Its function is as follows. Type II interferon produced by immune cells such as T-cells and NK cells that plays crucial roles in antimicrobial, antiviral, and antitumor responses by activating effector immune cells and enhancing antigen presentation. Primarily signals through the JAK-STAT pathway after interaction with its receptor IFNGR1 to affect gene regulation. Upon IFNG binding, IFNGR1 intracellular domain opens out to allow association of downstream signaling components JAK2, JAK1 and STAT1, leading to STAT1 activation, nuclear translocation and transcription of IFNG-regulated genes. Many of the induced genes are transcription factors such as IRF1 that are able to further drive regulation of a next wave of transcription. Plays a role in class I antigen presentation pathway by inducing a replacement of catalytic proteasome subunits with immunoproteasome subunits. In turn, increases the quantity, quality, and repertoire of peptides for class I MHC loading. Increases the efficiency of peptide generation also by inducing the expression of activator PA28 that associates with the proteasome and alters its proteolytic cleavage preference. Up-regulates as well MHC II complexes on the cell surface by promoting expression of several key molecules such as cathepsins B/CTSB, H/CTSH, and L/CTSL. Participates in the regulation of hematopoietic stem cells during development and under homeostatic conditions by affecting their development, quiescence, and differentiation. This chain is Interferon gamma (IFNG), found in Bubalus carabanensis (Swamp type water buffalo).